We begin with the raw amino-acid sequence, 122 residues long: ATP-dependent Clp protease adapter protein ClpS (122 aa).

The interval M1–S27 is disordered. Residues S10 to A19 show a composition bias toward pro residues.

It belongs to the ClpS family. As to quaternary structure, binds to the N-terminal domain of the chaperone ClpA.

Its function is as follows. Involved in the modulation of the specificity of the ClpAP-mediated ATP-dependent protein degradation. This Paracidovorax citrulli (strain AAC00-1) (Acidovorax citrulli) protein is ATP-dependent Clp protease adapter protein ClpS.